The sequence spans 219 residues: Putative NAD(P)H nitroreductase SSP0379 (219 aa).

This sequence belongs to the nitroreductase family. It depends on FMN as a cofactor.

The protein is Putative NAD(P)H nitroreductase SSP0379 of Staphylococcus saprophyticus subsp. saprophyticus (strain ATCC 15305 / DSM 20229 / NCIMB 8711 / NCTC 7292 / S-41).